A 231-amino-acid chain; its full sequence is Putative carboxymethylenebutenolidase (231 aa).

Catalysis depends on residues C118, D167, and H199.

This sequence belongs to the dienelactone hydrolase family.

The catalysed reaction is 2-(5-oxo-2,5-dihydrofuran-2-ylidene)acetate + H2O = 4-oxohex-2-enedioate + H(+). In Aquifex aeolicus (strain VF5), this protein is Putative carboxymethylenebutenolidase.